A 453-amino-acid polypeptide reads, in one-letter code: UDP-N-acetylmuramoylalanine--D-glutamate ligase (453 aa).

119–125 (GSNGKTT) serves as a coordination point for ATP.

It belongs to the MurCDEF family.

It is found in the cytoplasm. It catalyses the reaction UDP-N-acetyl-alpha-D-muramoyl-L-alanine + D-glutamate + ATP = UDP-N-acetyl-alpha-D-muramoyl-L-alanyl-D-glutamate + ADP + phosphate + H(+). It functions in the pathway cell wall biogenesis; peptidoglycan biosynthesis. Functionally, cell wall formation. Catalyzes the addition of glutamate to the nucleotide precursor UDP-N-acetylmuramoyl-L-alanine (UMA). The sequence is that of UDP-N-acetylmuramoylalanine--D-glutamate ligase from Streptococcus uberis (strain ATCC BAA-854 / 0140J).